The sequence spans 123 residues: Ribonuclease P protein component (123 aa).

Belongs to the RnpA family. In terms of assembly, consists of a catalytic RNA component (M1 or rnpB) and a protein subunit.

It catalyses the reaction Endonucleolytic cleavage of RNA, removing 5'-extranucleotides from tRNA precursor.. Its function is as follows. RNaseP catalyzes the removal of the 5'-leader sequence from pre-tRNA to produce the mature 5'-terminus. It can also cleave other RNA substrates such as 4.5S RNA. The protein component plays an auxiliary but essential role in vivo by binding to the 5'-leader sequence and broadening the substrate specificity of the ribozyme. The sequence is that of Ribonuclease P protein component from Streptococcus pneumoniae (strain JJA).